A 141-amino-acid polypeptide reads, in one-letter code: Protein E6 (141 aa).

2 zinc fingers span residues 27–64 (CRFC…CSSC) and 101–137 (CKFC…CRHC).

It belongs to the papillomaviridae E6 protein family. Forms homodimers. Interacts with ubiquitin-protein ligase UBE3A/E6-AP; this interaction stimulates UBE3A ubiquitin activity. Interacts with host BAK1.

The protein localises to the host cytoplasm. It is found in the host nucleus. Its function is as follows. Plays a major role in the induction and maintenance of cellular transformation. E6 associates with host UBE3A/E6-AP ubiquitin-protein ligase and modulates its activity. Protects host keratinocytes from apoptosis by mediating the degradation of host BAK1. May also inhibit host immune response. This Human papillomavirus 17 protein is Protein E6.